We begin with the raw amino-acid sequence, 309 residues long: Ribonuclease Z (309 aa).

Residues His-63, His-65, Asp-67, His-68, His-141, Asp-212, and His-270 each coordinate Zn(2+). Catalysis depends on Asp-67, which acts as the Proton acceptor.

The protein belongs to the RNase Z family. Homodimer. It depends on Zn(2+) as a cofactor.

It catalyses the reaction Endonucleolytic cleavage of RNA, removing extra 3' nucleotides from tRNA precursor, generating 3' termini of tRNAs. A 3'-hydroxy group is left at the tRNA terminus and a 5'-phosphoryl group is left at the trailer molecule.. Zinc phosphodiesterase, which displays some tRNA 3'-processing endonuclease activity. Probably involved in tRNA maturation, by removing a 3'-trailer from precursor tRNA. This is Ribonuclease Z from Limosilactobacillus reuteri (strain DSM 20016) (Lactobacillus reuteri).